The sequence spans 176 residues: Probable RNA-binding protein EIF1AD (176 aa).

The 85-residue stretch at 5–89 (TKKRYITNKV…VKGEIEYILD (85 aa)) folds into the S1-like domain. Basic and acidic residues predominate over residues 117-128 (AKRGKANDKMID). The interval 117 to 176 (AKRGKANDKMIDDDMLPPSESEEEDDESEDEIEDTYDEDEETDDEEFDTYNPNRMQAPSK) is disordered. Acidic residues predominate over residues 129–164 (DDMLPPSESEEEDDESEDEIEDTYDEDEETDDEEFD). Positions 166–176 (YNPNRMQAPSK) are enriched in polar residues.

The protein belongs to the EIF1AD family.

The protein is Probable RNA-binding protein EIF1AD of Caenorhabditis briggsae.